The sequence spans 560 residues: Dihydroxy-acid dehydratase (560 aa).

Aspartate 80 provides a ligand contact to Mg(2+). Cysteine 121 is a [2Fe-2S] cluster binding site. Positions 122 and 123 each coordinate Mg(2+). Residue lysine 123 is modified to N6-carboxylysine. Residue cysteine 194 participates in [2Fe-2S] cluster binding. Mg(2+) is bound at residue glutamate 447. Serine 473 functions as the Proton acceptor in the catalytic mechanism.

Belongs to the IlvD/Edd family. Homodimer. [2Fe-2S] cluster is required as a cofactor. It depends on Mg(2+) as a cofactor.

It carries out the reaction (2R)-2,3-dihydroxy-3-methylbutanoate = 3-methyl-2-oxobutanoate + H2O. The enzyme catalyses (2R,3R)-2,3-dihydroxy-3-methylpentanoate = (S)-3-methyl-2-oxopentanoate + H2O. It functions in the pathway amino-acid biosynthesis; L-isoleucine biosynthesis; L-isoleucine from 2-oxobutanoate: step 3/4. The protein operates within amino-acid biosynthesis; L-valine biosynthesis; L-valine from pyruvate: step 3/4. Its function is as follows. Functions in the biosynthesis of branched-chain amino acids. Catalyzes the dehydration of (2R,3R)-2,3-dihydroxy-3-methylpentanoate (2,3-dihydroxy-3-methylvalerate) into 2-oxo-3-methylpentanoate (2-oxo-3-methylvalerate) and of (2R)-2,3-dihydroxy-3-methylbutanoate (2,3-dihydroxyisovalerate) into 2-oxo-3-methylbutanoate (2-oxoisovalerate), the penultimate precursor to L-isoleucine and L-valine, respectively. In Chloroherpeton thalassium (strain ATCC 35110 / GB-78), this protein is Dihydroxy-acid dehydratase.